The chain runs to 284 residues: Bifunctional protein FolD (284 aa).

NADP(+) is bound by residues 165–167 (GRS), serine 190, and isoleucine 231.

The protein belongs to the tetrahydrofolate dehydrogenase/cyclohydrolase family. As to quaternary structure, homodimer.

The enzyme catalyses (6R)-5,10-methylene-5,6,7,8-tetrahydrofolate + NADP(+) = (6R)-5,10-methenyltetrahydrofolate + NADPH. It carries out the reaction (6R)-5,10-methenyltetrahydrofolate + H2O = (6R)-10-formyltetrahydrofolate + H(+). The protein operates within one-carbon metabolism; tetrahydrofolate interconversion. Functionally, catalyzes the oxidation of 5,10-methylenetetrahydrofolate to 5,10-methenyltetrahydrofolate and then the hydrolysis of 5,10-methenyltetrahydrofolate to 10-formyltetrahydrofolate. In Lysinibacillus sphaericus (strain C3-41), this protein is Bifunctional protein FolD.